The sequence spans 213 residues: CASP-like protein 2A1 (213 aa).

At 1–41 (MSKMAEEKAAAVGGLGGAGAADAAQQQQLAAGEAAAARVRP) the chain is on the cytoplasmic side. The helical transmembrane segment at 42–62 (VETLLRAAPLGLCVAAMTVML) threads the bilayer. Over 63-83 (RNQQSNEYGAVAYSDLGGFKY) the chain is Extracellular. The chain crosses the membrane as a helical span at residues 84–104 (LVYANGLCAAYSLVSAFYTAV). At 105–113 (PRPATVSRS) the chain is on the cytoplasmic side. A helical membrane pass occupies residues 114 to 134 (WLVFLLDQVFTYLILAAGAAA). The Extracellular portion of the chain corresponds to 135–166 (AELLYLAYNGDKEVTWSEACGVFGSFCRQART). Residues 167 to 187 (SVAITFGTVLCFILLSLISSY) traverse the membrane as a helical segment. The Cytoplasmic segment spans residues 188–213 (RLFSAYEAPPSSALGSKGVEIAAYPR).

It belongs to the Casparian strip membrane proteins (CASP) family. As to quaternary structure, homodimer and heterodimers.

Its subcellular location is the cell membrane. This Zea mays (Maize) protein is CASP-like protein 2A1.